The following is a 977-amino-acid chain: Disks large-associated protein 3 (977 aa).

The segment covering 1-10 (MRGYHGDRGS) has biased composition (basic and acidic residues). Disordered stretches follow at residues 1–24 (MRGY…QHMD), 52–96 (AGLG…MYPG), 137–167 (FHTL…ESPS), 181–289 (AKSH…CLDA), 398–417 (AMGD…SPKA), and 529–582 (PGSS…SADG). Positions 53-73 (GLGHLSPEGPLSLSEGPSSVG) are enriched in low complexity. A Phosphoserine modification is found at serine 58. A compositionally biased stretch (gly residues) spans 74–87 (PEGGPGGVGAGGGS). Basic and acidic residues predominate over residues 189–201 (PGKRDYNGPKADG). Residues 221–245 (SHHHHHHHHHHHHQSRHGKRSKSKD) show a composition bias toward basic residues. Positions 258-271 (GWWSSDDNLDSDSG) are enriched in low complexity. A phosphoserine mark is found at serine 404, serine 407, serine 410, and serine 414. Residues 538 to 547 (APPPIPPGSQ) show a composition bias toward pro residues. Phosphoserine is present on residues serine 641 and serine 643. 2 disordered regions span residues 739–788 (EGYP…RTSP) and 906–939 (EEKK…RQRQ). Composition is skewed to basic and acidic residues over residues 767–777 (GRRDSWMERGS) and 925–939 (PVKE…RQRQ). 3 positions are modified to phosphoserine: serine 930, serine 933, and serine 965.

It belongs to the SAPAP family. In terms of assembly, interacts with DLG4/PSD-95. As to expression, highly expressed in central and peripherical nervous system (at protein level).

It localises to the cell membrane. It is found in the postsynaptic density. The protein localises to the synapse. May play a role in the molecular organization of synapses and neuronal cell signaling. Could be an adapter protein linking ion channel to the subsynaptic cytoskeleton. May induce enrichment of PSD-95/SAP90 at the plasma membrane. This is Disks large-associated protein 3 (Dlgap3) from Mus musculus (Mouse).